The primary structure comprises 108 residues: Small ribosomal subunit protein uS17 (108 aa).

The protein belongs to the universal ribosomal protein uS17 family. As to quaternary structure, part of the 30S ribosomal subunit.

Functionally, one of the primary rRNA binding proteins, it binds specifically to the 5'-end of 16S ribosomal RNA. This Methanoregula boonei (strain DSM 21154 / JCM 14090 / 6A8) protein is Small ribosomal subunit protein uS17.